The chain runs to 38 residues: Trypsin inhibitor DE5 beta chain (38 aa).

Belongs to the protease inhibitor I3 (leguminous Kunitz-type inhibitor) family. In terms of assembly, heterodimer of an alpha and a beta chain linked by a disulfide bond.

Its function is as follows. Inhibition of trypsin. The protein is Trypsin inhibitor DE5 beta chain of Adenanthera pavonina (Sandal bead tree).